The chain runs to 161 residues: Urocortin-3 (161 aa).

The N-terminal stretch at 1 to 21 is a signal peptide; sequence MLMPVHFLLLLLLLLGGPRTG. A propeptide spanning residues 22-118 is cleaved from the precursor; it reads LPHKFYKAKP…QDTAKSPHRT (97 aa). The disordered stretch occupies residues 64 to 118; sequence SRDASSGEEEEGKEKKTFPISGARGGARGTRYRYVSQAQPRGKPRQDTAKSPHRT. I157 bears the Isoleucine amide mark.

This sequence belongs to the sauvagine/corticotropin-releasing factor/urotensin I family. Binds with high affinity to CRF receptors 2-alpha and 2-beta.

It localises to the secreted. In terms of biological role, suppresses food intake, delays gastric emptying and decreases heat-induced edema. Might represent an endogenous ligand for maintaining homeostasis after stress. The protein is Urocortin-3 (UCN3) of Homo sapiens (Human).